A 2055-amino-acid chain; its full sequence is Protein PHOTOPERIOD-INDEPENDENT EARLY FLOWERING 1 (2055 aa).

A disordered region spans residues 1–47 (MASKGGKSKPDIVMASKSGKSKPDNESRAKRQKTLEAPKEPRRPKTH). A compositionally biased stretch (basic and acidic residues) spans 21-47 (SKPDNESRAKRQKTLEAPKEPRRPKTH). The Nuclear localization signal 1 signature appears at 29–36 (AKRQKTLE). The region spanning 35–107 (LEAPKEPRRP…EEQRLRKVAL (73 aa)) is the HSA domain. 2 coiled-coil regions span residues 78–147 (LRAS…LEFL) and 229–250 (EEDEKHFTKRERQEELEALQNE). 2 disordered regions span residues 183-332 (KSDE…SNDS) and 340-359 (ETHSHDLEPGMTTASVKSRK). A compositionally biased stretch (acidic residues) spans 208–230 (ELDEDYDLKSEDETEDDEDTIEE). Basic and acidic residues-rich tracts occupy residues 231–243 (DEKHFTKRERQEE) and 267–276 (VSRETSPVKD). Residues 392-416 (EEELAKADNEDHVEEIALLQKESEM) adopt a coiled-coil conformation. Residues 432–461 (KDISEDESESSFAVSEDSIVDSDENRQQAD) are disordered. In terms of domain architecture, Helicase ATP-binding spans 548 to 713 (VTMYEKKLNG…WSLMHFLMPH (166 aa)). 561-568 (DEMGLGKT) contributes to the ATP binding site. Positions 664–667 (DEAH) match the DEAH box motif. In terms of domain architecture, Helicase C-terminal spans 1076–1229 (KLQELAMLLR…NLVIQNGEYN (154 aa)). The interval 1293–1313 (EEAVDNQEFTEEPVERPEDDE) is disordered. A coiled-coil region spans residues 1419-1492 (FEEKEWELDH…EREAAEVAEM (74 aa)). Short sequence motifs (nuclear localization signal) lie at residues 1506-1513 (KKKKKAKK) and 1570-1577 (KKRDLIVD). A disordered region spans residues 1577–1597 (DTDEEKTSKKKAKKHKKSLPN). The span at 1584–1594 (SKKKAKKHKKS) shows a compositional bias: basic residues. The Myb-like domain occupies 1673–1727 (SWLPQEDAILCAMVHEYGPNWNFVSGTLYGMTAGGAYRGRYRHPAYCCERYRELI). Disordered regions lie at residues 1843–1864 (ALQDSGPSQPDNTISRSRLQET) and 1951–1977 (KSRTGTKAQSLGKHKLSASDSAKSTKS). The span at 1844-1864 (LQDSGPSQPDNTISRSRLQET) shows a compositional bias: polar residues. A coiled-coil region spans residues 2006-2029 (GDREEEEEQEVDEKANSAEIEMIS).

Belongs to the SNF2/RAD54 helicase family. SWR1 subfamily. In terms of assembly, component of the SWR1 chromatin-remodeling complex composed of at least ARP6/ESD1/SUF3, PIE1, SWC6, SWC2 and H2AZs (HTA8, HTA9, HTA11). Interacts (via c-terminus) with SWC6 and ARP6 and (via N-terminus) with H2AZs. Expressed in ovules, but not in stamens.

The protein resides in the nucleus. It catalyses the reaction ATP + H2O = ADP + phosphate + H(+). Functionally, component of the SWR1 complex which mediates the ATP-dependent exchange of histone H2A for the H2A variant H2A.F/Z leading to transcriptional regulation of selected genes (e.g. FLC) by chromatin remodeling. Probable DNA-dependent ATPase. Not involved in the repression of FLC in gametophytes, but required for the reactivation of FLC in early embryos and for the maintenance of full activation of FLC in late embryos. This chain is Protein PHOTOPERIOD-INDEPENDENT EARLY FLOWERING 1 (PIE1), found in Arabidopsis thaliana (Mouse-ear cress).